We begin with the raw amino-acid sequence, 653 residues long: DUF21 domain-containing protein At1g55930, chloroplastic (653 aa).

Residues 1-72 (MELDLSVLGR…DFSHRCQFVV (72 aa)) constitute a chloroplast transit peptide. 5 consecutive transmembrane segments (helical) span residues 103 to 123 (GIVLGAVVCGVLFYGCGKVLA), 157 to 177 (GLILAVLLGLSAFFSMAETSI), 208 to 228 (FLTTILIGTTVVNIAATALVT), 234 to 254 (IFGEAGVSAATGVMTVAILLL), and 280 to 300 (WLSLILYPVGRVVTYLSMGIL). One can recognise a CNNM transmembrane domain in the interval 149–335 (VLKVLREQGL…ELSGAIEEEE (187 aa)). CBS domains lie at 354–415 (MTPL…LLES) and 421–479 (MAHK…IFDE).

The protein localises to the plastid. The protein resides in the chloroplast membrane. In Arabidopsis thaliana (Mouse-ear cress), this protein is DUF21 domain-containing protein At1g55930, chloroplastic (CBSDUFCH2).